Consider the following 179-residue polypeptide: Inner membrane-spanning protein YciB (179 aa).

A run of 5 helical transmembrane segments spans residues 22-42 (IYAATSALIVATAIVLIYSWV), 50-70 (MALITFVLVAVFGGLTLFFHN), 76-96 (WKVTVIYALFAGALLISQWVM), 121-141 (LAWALFFIACGLANIYIAFWL), and 149-169 (FKVFGLTALTLIFTLLSGVYI).

This sequence belongs to the YciB family.

It localises to the cell inner membrane. Plays a role in cell envelope biogenesis, maintenance of cell envelope integrity and membrane homeostasis. The polypeptide is Inner membrane-spanning protein YciB (Salmonella agona (strain SL483)).